Consider the following 427-residue polypeptide: Homoprotocatechuate catabolism bifunctional isomerase/decarboxylase (427 aa).

Approximate repeat units follow at residues 1-202 and 203-405; these read MKGT…LENP and VVDE…VGDE. The a divalent metal cation site is built by Glu-276, Glu-278, and Asp-307.

It belongs to the FAH family. In terms of assembly, monomer. The cofactor is Mg(2+).

The enzyme catalyses (2E,4Z)-5-hydroxypenta-2,4-diene-1,2,5-tricarboxylate = (3E,5R)-5-carboxy-2-oxohept-3-enedioate. It catalyses the reaction (3E,5R)-5-carboxy-2-oxohept-3-enedioate + H(+) = (4Z)-2-oxohept-4-enedioate + CO2. Its pathway is aromatic compound metabolism; 4-hydroxyphenylacetate degradation; pyruvate and succinate semialdehyde from 4-hydroxyphenylacetate: step 4/7. The protein operates within aromatic compound metabolism; 4-hydroxyphenylacetate degradation; pyruvate and succinate semialdehyde from 4-hydroxyphenylacetate: step 5/7. Functionally, decarboxylates OPET (5-oxo-pent-3-ene-1,2,5-tricarboxylic acid) into HHDD (2-hydroxy-hept-2,4-diene-1,7-dioate) and isomerizes it to OHED (2-oxo-hept-3-ene-1,7-dioate). This Escherichia coli protein is Homoprotocatechuate catabolism bifunctional isomerase/decarboxylase (hpcE).